A 247-amino-acid chain; its full sequence is Protein GrpE (247 aa).

2 disordered regions span residues 1–64 (MNDE…QALD) and 214–247 (SMGP…EKSD). 3 stretches are compositionally biased toward polar residues: residues 30–39 (DEPSLSNVAE), 49–63 (DVTS…SQAL), and 228–241 (TEQS…TDQQ).

It belongs to the GrpE family. In terms of assembly, homodimer.

The protein localises to the cytoplasm. Its function is as follows. Participates actively in the response to hyperosmotic and heat shock by preventing the aggregation of stress-denatured proteins, in association with DnaK and GrpE. It is the nucleotide exchange factor for DnaK and may function as a thermosensor. Unfolded proteins bind initially to DnaJ; upon interaction with the DnaJ-bound protein, DnaK hydrolyzes its bound ATP, resulting in the formation of a stable complex. GrpE releases ADP from DnaK; ATP binding to DnaK triggers the release of the substrate protein, thus completing the reaction cycle. Several rounds of ATP-dependent interactions between DnaJ, DnaK and GrpE are required for fully efficient folding. This is Protein GrpE from Prochlorococcus marinus (strain MIT 9211).